The sequence spans 322 residues: 8-oxo-(d)GTP phosphatase (322 aa).

Positions 1 to 21 (MMPVDDLQEIPLSKDTTEKSK) are disordered. One can recognise a Nudix hydrolase domain in the interval 22 to 156 (HTVRAAGAVL…DDRKVLRRFV (135 aa)). Substrate is bound by residues 55–58 (RPRY), Asp60, and 65–67 (KGK). Lys65, Glu81, and Glu85 together coordinate Mg(2+). A Nudix box motif is present at residues 66–87 (GKLDQGETEPVAAAREIHEETG). Substrate is bound by residues Tyr101, Lys108, Glu127, and Tyr145. Residue Glu127 coordinates Mg(2+).

Belongs to the Nudix hydrolase family. In terms of assembly, forms head-to-tail homodimers. Requires Mg(2+) as cofactor.

It catalyses the reaction 8-oxo-dGTP + H2O = 8-oxo-dGDP + phosphate + H(+). It carries out the reaction 8-oxo-GTP + H2O = 8-oxo-GDP + phosphate + H(+). The enzyme catalyses 8-oxo-dGDP + H2O = 8-oxo-dGMP + phosphate + H(+). The catalysed reaction is 8-oxo-GDP + H2O = 8-oxo-GMP + phosphate + H(+). It catalyses the reaction P(1),P(6)-bis(5'-adenosyl) hexaphosphate + H2O = 2 ATP + 2 H(+). It carries out the reaction P(1),P(5)-bis(5'-adenosyl) pentaphosphate + H2O = ADP + ATP + 2 H(+). The enzyme catalyses P(1),P(4)-bis(5'-adenosyl) tetraphosphate + H2O = AMP + ATP + 2 H(+). Its activity is regulated as follows. Ap4A hydrolysis is inhibited by fluoride ions. Functionally, catalyzes the conversion of 8-oxo-dGTP to 8-oxo-dGDP, and 8-oxo-GTP to 8-oxo-GDP. At high enzyme concentrations, can also catalyze the conversion of 8-oxo-dGDP to 8-oxo-dGMP, and 8-oxo-GDP to 8-oxo-GMP. In addition, catalyzes the hydrolysis of the diadenosine polyphosphates diadenosine hexaphosphate (Ap6A), diadenosine pentaphosphate (Ap5A) and diadenosine tetraphosphate (Ap4A). The sequence is that of 8-oxo-(d)GTP phosphatase from Mycolicibacterium smegmatis (strain ATCC 700084 / mc(2)155) (Mycobacterium smegmatis).